The chain runs to 281 residues: Protein synthesis inhibitor I (281 aa).

Ala2 carries the N-acetylalanine modification. Glu175 is a catalytic residue.

This sequence belongs to the ribosome-inactivating protein family. Type 1 RIP subfamily.

The protein resides in the cytoplasm. It carries out the reaction Endohydrolysis of the N-glycosidic bond at one specific adenosine on the 28S rRNA.. Its function is as follows. Inhibits the elongation phase of protein synthesis. It inactivates fungal ribosomes even more effectively than mammalian ribosomes and is thought to function as a constitutive antifungal agent in plants. This Hordeum vulgare (Barley) protein is Protein synthesis inhibitor I (RIP30).